The chain runs to 329 residues: Putative glycosyltransferase CsbB (329 aa).

Helical transmembrane passes span 231-251 and 264-284; these read CFYT…ATFV and FTII…LGII.

This sequence belongs to the glycosyltransferase 2 family. GtrB subfamily.

The protein resides in the cell membrane. The chain is Putative glycosyltransferase CsbB (csbB) from Bacillus subtilis (strain 168).